A 449-amino-acid chain; its full sequence is Bifunctional protein GlmU (449 aa).

The interval 1 to 229 (MKLSAVILAA…EEDIYGINDR (229 aa)) is pyrophosphorylase. Residues 8 to 11 (LAAG), Lys-22, Gln-73, and 78 to 79 (GT) contribute to the UDP-N-acetyl-alpha-D-glucosamine site. Asp-102 contacts Mg(2+). UDP-N-acetyl-alpha-D-glucosamine-binding residues include Gly-139, Glu-154, Asn-169, and Asn-227. Asn-227 provides a ligand contact to Mg(2+). A linker region spans residues 230–250 (VQLAQAENILRQRKNRELMLS). An N-acetyltransferase region spans residues 251 to 449 (GVSLMDPAST…AGQKHLPRKG (199 aa)). Residues Arg-332 and Lys-350 each contribute to the UDP-N-acetyl-alpha-D-glucosamine site. His-362 acts as the Proton acceptor in catalysis. UDP-N-acetyl-alpha-D-glucosamine contacts are provided by Tyr-365 and Asn-376. Residues Ala-379, 385 to 386 (NY), Ser-404, Ala-422, and Arg-439 contribute to the acetyl-CoA site.

This sequence in the N-terminal section; belongs to the N-acetylglucosamine-1-phosphate uridyltransferase family. In the C-terminal section; belongs to the transferase hexapeptide repeat family. Homotrimer. Mg(2+) is required as a cofactor.

It localises to the cytoplasm. It carries out the reaction alpha-D-glucosamine 1-phosphate + acetyl-CoA = N-acetyl-alpha-D-glucosamine 1-phosphate + CoA + H(+). The catalysed reaction is N-acetyl-alpha-D-glucosamine 1-phosphate + UTP + H(+) = UDP-N-acetyl-alpha-D-glucosamine + diphosphate. The protein operates within nucleotide-sugar biosynthesis; UDP-N-acetyl-alpha-D-glucosamine biosynthesis; N-acetyl-alpha-D-glucosamine 1-phosphate from alpha-D-glucosamine 6-phosphate (route II): step 2/2. It functions in the pathway nucleotide-sugar biosynthesis; UDP-N-acetyl-alpha-D-glucosamine biosynthesis; UDP-N-acetyl-alpha-D-glucosamine from N-acetyl-alpha-D-glucosamine 1-phosphate: step 1/1. Its pathway is bacterial outer membrane biogenesis; LPS lipid A biosynthesis. In terms of biological role, catalyzes the last two sequential reactions in the de novo biosynthetic pathway for UDP-N-acetylglucosamine (UDP-GlcNAc). The C-terminal domain catalyzes the transfer of acetyl group from acetyl coenzyme A to glucosamine-1-phosphate (GlcN-1-P) to produce N-acetylglucosamine-1-phosphate (GlcNAc-1-P), which is converted into UDP-GlcNAc by the transfer of uridine 5-monophosphate (from uridine 5-triphosphate), a reaction catalyzed by the N-terminal domain. This Syntrophomonas wolfei subsp. wolfei (strain DSM 2245B / Goettingen) protein is Bifunctional protein GlmU.